Consider the following 499-residue polypeptide: Bifunctional purine biosynthesis protein PurH (499 aa).

The region spanning Met1–Thr144 is the MGS-like domain.

This sequence belongs to the PurH family.

It carries out the reaction (6R)-10-formyltetrahydrofolate + 5-amino-1-(5-phospho-beta-D-ribosyl)imidazole-4-carboxamide = 5-formamido-1-(5-phospho-D-ribosyl)imidazole-4-carboxamide + (6S)-5,6,7,8-tetrahydrofolate. The catalysed reaction is IMP + H2O = 5-formamido-1-(5-phospho-D-ribosyl)imidazole-4-carboxamide. It participates in purine metabolism; IMP biosynthesis via de novo pathway; 5-formamido-1-(5-phospho-D-ribosyl)imidazole-4-carboxamide from 5-amino-1-(5-phospho-D-ribosyl)imidazole-4-carboxamide (10-formyl THF route): step 1/1. It functions in the pathway purine metabolism; IMP biosynthesis via de novo pathway; IMP from 5-formamido-1-(5-phospho-D-ribosyl)imidazole-4-carboxamide: step 1/1. The sequence is that of Bifunctional purine biosynthesis protein PurH from Clostridium acetobutylicum (strain ATCC 824 / DSM 792 / JCM 1419 / IAM 19013 / LMG 5710 / NBRC 13948 / NRRL B-527 / VKM B-1787 / 2291 / W).